Here is a 1190-residue protein sequence, read N- to C-terminus: Phosphatidylinositol-3,5-bisphosphate 3-phosphatase MTMR4 (1190 aa).

S8 is subject to Phosphoserine. The Myotubularin phosphatase domain maps to 153–570 (EHIRCRQEAE…RALHLWTAVY (418 aa)). 3 residues coordinate a 1,2-diacyl-sn-glycero-3-phospho-(1D-myo-inositol-3,5-bisphosphate): N320, N345, and I346. 3 residues coordinate a 1,2-diacyl-sn-glycero-3-phospho-(1D-myo-inositol-3-phosphate): N320, N345, and I346. The active-site Phosphocysteine intermediate is the C407. A 1,2-diacyl-sn-glycero-3-phospho-(1D-myo-inositol-3,5-bisphosphate)-binding residues include S408, D409, G410, W411, D412, R413, K449, and R453. Residues S408, D409, G410, W411, D412, and R413 each coordinate a 1,2-diacyl-sn-glycero-3-phospho-(1D-myo-inositol-3-phosphate). R453 serves as a coordination point for a 1,2-diacyl-sn-glycero-3-phospho-(1D-myo-inositol-3-phosphate). Phosphoserine occurs at positions 610 and 629. Disordered stretches follow at residues 616–694 (SACD…FKGH), 724–749 (ETEA…GKPP), and 773–848 (DFPE…PSSV). Over residues 618–637 (CDTSSPLTRTSSDPNLNNHS) the composition is skewed to polar residues. Residues 782-847 (LTGTPQQPHL…SISHQEQPSS (66 aa)) are compositionally biased toward polar residues. Positions 999 to 1003 (VPPLY) match the PY-motif; substrate motif for NEDD4 motif. Residues 1020 to 1052 (LRQIEAGYRQEVEQLRRQVRELQMRLDIRHCCA) adopt a coiled-coil conformation. The FYVE-type zinc finger occupies 1109–1169 (DHMASHCFNC…VCNSCYEHIQ (61 aa)). The Zn(2+) site is built by C1115, C1118, C1131, C1134, C1139, C1142, C1161, and C1164.

This sequence belongs to the protein-tyrosine phosphatase family. Non-receptor class myotubularin subfamily. In terms of assembly, homooligomeric. Forms MTMR3:MTMR4 heterooligomers; regulates the localization of both proteins. The MTMR3:MTMR4 heterooligomer can also recruit both CEP55 and PLK1; occurs during early mitosis, regulates the phosphorylation of CEP55 by PLK1 and its recruitment to the midbody where it can mediate cell abscission. Interacts with SMAD2 and SMAD3; negatively regulates TGF-beta signaling through SMAD2 and SMAD3 dephosphorylation and retention in endosomes. Interacts with SMAD1; negatively regulates BMP signaling through SMAD1 dephosphorylation and retention in endosomes. In terms of processing, ubiquitinated. Ubiquitination by NEDD4 probably leads to proteasomal degradation. Post-translationally, phosphorylated by CDK1 during mitosis.

The protein localises to the early endosome membrane. It localises to the recycling endosome membrane. The protein resides in the late endosome membrane. Its subcellular location is the cytoplasmic vesicle. It is found in the phagosome membrane. The catalysed reaction is a 1,2-diacyl-sn-glycero-3-phospho-(1D-myo-inositol-3-phosphate) + H2O = a 1,2-diacyl-sn-glycero-3-phospho-(1D-myo-inositol) + phosphate. It catalyses the reaction a 1,2-diacyl-sn-glycero-3-phospho-(1D-myo-inositol-3,5-bisphosphate) + H2O = a 1,2-diacyl-sn-glycero-3-phospho-(1D-myo-inositol-5-phosphate) + phosphate. It carries out the reaction 1,2-dioctanoyl-sn-glycero-3-phospho-(1-D-myo-inositol-3-phosphate) + H2O = 1,2-dioctanoyl-sn-glycero-3-phospho-(1D-myo-inositol) + phosphate. The enzyme catalyses 1,2-dioctanoyl-sn-glycero-3-phospho-(1D-myo-inositol-3,5-bisphosphate) + H2O = 1,2-dioctanoyl-sn-glycero-3-phospho-(1D-myo-inositol-5-phosphate) + phosphate. In terms of biological role, lipid phosphatase that specifically dephosphorylates the D-3 position of phosphatidylinositol 3-phosphate and phosphatidylinositol 3,5-bisphosphate, generating phosphatidylinositol and phosphatidylinositol 5-phosphate. Decreases the levels of phosphatidylinositol 3-phosphate, a phospholipid found in cell membranes where it acts as key regulator of both cell signaling and intracellular membrane traffic, in a subset of endosomal membranes to negatively regulate both endocytic recycling and trafficking and/or maturation of endosomes toward lysosomes. Through phosphatidylinositol 3-phosphate turnover in phagosome membranes regulates phagocytosis and phagosome maturation. By decreasing phosphatidylinositol 3-monophosphate (PI3P) levels in immune cells it can also regulate the innate immune response. Beside its lipid phosphatase activity, can also function as a molecular adapter to regulate midbody abscission during mitotic cytokinesis. Can also negatively regulate TGF-beta and BMP signaling through Smad proteins dephosphorylation and retention in endosomes. The sequence is that of Phosphatidylinositol-3,5-bisphosphate 3-phosphatase MTMR4 from Mus musculus (Mouse).